Consider the following 126-residue polypeptide: Prefoldin subunit beta (126 aa).

This sequence belongs to the prefoldin subunit beta family. Heterohexamer of two alpha and four beta subunits.

The protein resides in the cytoplasm. Molecular chaperone capable of stabilizing a range of proteins. Seems to fulfill an ATP-independent, HSP70-like function in archaeal de novo protein folding. The sequence is that of Prefoldin subunit beta from Methanocella arvoryzae (strain DSM 22066 / NBRC 105507 / MRE50).